Reading from the N-terminus, the 1790-residue chain is Atrochrysone carboxylic acid synthase (1790 aa).

An N-terminal acylcarrier protein transacylase domain (SAT) region spans residues 27–265 (RDLQDLFRQA…ALPVYGGLCH (239 aa)). A Ketosynthase family 3 (KS3) domain is found at 399–833 (QSKLAIVGMS…GGNTTMILED (435 aa)). Catalysis depends on for beta-ketoacyl synthase activity residues Cys572, His708, and His751. A malonyl-CoA:ACP transacylase (MAT) domain region spans residues 934 to 1254 (FSFTGQGASH…IAQLYTVGVD (321 aa)). Residues 1323–1475 (QQIVEQVFDT…SLTHLVRDRI (153 aa)) form an N-terminal hotdog fold region. Residues 1323-1634 (QQIVEQVFDT…FHRYRRILLE (312 aa)) form the PKS/mFAS DH domain. His1357 acts as the Proton acceptor; for dehydratase activity in catalysis. Residues 1357–1631 (HRMNDCGVAT…GIEFHRYRRI (275 aa)) are product template (PT) domain. The C-terminal hotdog fold stretch occupies residues 1487 to 1634 (ANRLSHNMAY…FHRYRRILLE (148 aa)). Residue Asp1545 is the Proton donor; for dehydratase activity of the active site. A disordered region spans residues 1644 to 1667 (NLDDTTETKDISSSTQHSVPVSRQ). Positions 1654 to 1664 (ISSSTQHSVPV) are enriched in polar residues. The Carrier domain occupies 1715–1789 (SSITNRAMQL…DLRNWLEETY (75 aa)). Ser1749 is subject to O-(pantetheine 4'-phosphoryl)serine.

It catalyses the reaction holo-[ACP] + 8 malonyl-CoA + 8 H(+) = atrochrysone carboxyl-[ACP] + 8 CO2 + 8 CoA + 2 H2O. It participates in pigment biosynthesis. In terms of biological role, non-reducing polyketide synthase; part of the gene cluster that mediates the biosynthesis of the bianthraquinone cladofulvin, a conidial pigment not required for virulence but that plays a role in fitness and resistance to environmental stresses including UV light and low-temperature stress. The pathway begins with the synthesis of atrochrysone thioester by the polyketide synthase (PKS) claG. The atrochrysone carboxyl ACP thioesterase claF then breaks the thioester bond and releases the atrochrysone carboxylic acid from claG. This compound is decarboxylated by claH to yield emodin, which is further converted to chrysophanol hydroquinone by the reductase claC and the dehydratase claB. The cytochrome P450 monooxygenase claM then catalyzes the dimerization of nataloe-emodin to cladofulvin. The polypeptide is Atrochrysone carboxylic acid synthase (Passalora fulva (Tomato leaf mold)).